We begin with the raw amino-acid sequence, 65 residues long: Large ribosomal subunit protein bL35 (65 aa).

A disordered region spans residues 1–20 (MPKMKTNSGSKKRFTLTGTG).

Belongs to the bacterial ribosomal protein bL35 family.

In Bacteroides thetaiotaomicron (strain ATCC 29148 / DSM 2079 / JCM 5827 / CCUG 10774 / NCTC 10582 / VPI-5482 / E50), this protein is Large ribosomal subunit protein bL35.